Consider the following 69-residue polypeptide: Small, acid-soluble spore protein A (69 aa).

This sequence belongs to the alpha/beta-type SASP family.

SASP are bound to spore DNA. They are double-stranded DNA-binding proteins that cause DNA to change to an a-like conformation. They protect the DNA backbone from chemical and enzymatic cleavage and are thus involved in dormant spore's high resistance to UV light. The polypeptide is Small, acid-soluble spore protein A (sspA) (Bacillus subtilis (strain 168)).